Consider the following 272-residue polypeptide: Dioscorin DB3L (272 aa).

Residues 1 to 25 (MSSSTLFHLFLLSSLLFSCLSNARP) form the signal peptide. The Alpha-carbonic anhydrase domain maps to 28-263 (DDFSYIEGSP…LKFRTIFFYP (236 aa)). Cysteines 53 and 213 form a disulfide.

The protein belongs to the alpha-class carbonic anhydrase family. As to quaternary structure, homodimer; disulfide-linked. Not glycosylated. As to expression, expressed in tuber (at protein level).

Its activity is regulated as follows. Loss of hemagglutinating activity by EDTA treatment. The activity is fully recovered by the addition of 5 mM Ca(2+) ions, but not with Mg(2+) and Mn 2(+). Hemagglutination activity is inhibited by maltose and its derivatives, with maltopentaose and maltohexaose being the best inhibitors followed by maltose and iso maltose. Not inhibited by glycoproteins. Functionally, maltose-binding lectin. No affinity is detected toward glucose. Has hemagglutinating activity against rabbit erythrocytes at 3.9 ug/ml. No carbonate dehydratase or trypsin inhibitor activity detected by measuring the hydrolysis of 4-nitrophenyl acetate or the inhibition of bovine trypsin-catalyzed hydrolysis of N-benzoyl-L-arginine ethyl ester, respectively. This Dioscorea polystachya (Chinese yam) protein is Dioscorin DB3L.